The primary structure comprises 350 residues: Small ribosomal subunit biogenesis GTPase RsgA (350 aa).

The span at 1 to 17 (MSKNKLSKGQQRRVNAN) shows a compositional bias: polar residues. Residues 1-27 (MSKNKLSKGQQRRVNANHQRRLKTSAE) form a disordered region. Positions 104 to 273 (TSVLTRPDFY…VIDSPGVREF (170 aa)) constitute a CP-type G domain. Residues 160–163 (NKID) and 214–222 (GQSGVGKSS) each bind GTP. Zn(2+)-binding residues include C297, C302, H304, and C310.

It belongs to the TRAFAC class YlqF/YawG GTPase family. RsgA subfamily. Monomer. Associates with 30S ribosomal subunit, binds 16S rRNA. It depends on Zn(2+) as a cofactor.

The protein localises to the cytoplasm. In terms of biological role, one of several proteins that assist in the late maturation steps of the functional core of the 30S ribosomal subunit. Helps release RbfA from mature subunits. May play a role in the assembly of ribosomal proteins into the subunit. Circularly permuted GTPase that catalyzes slow GTP hydrolysis, GTPase activity is stimulated by the 30S ribosomal subunit. The chain is Small ribosomal subunit biogenesis GTPase RsgA from Salmonella typhi.